The sequence spans 175 residues: Bifunctional protein PyrR (175 aa).

Residues threonine 40–arginine 41, aspartate 102–threonine 110, arginine 135, and valine 159 contribute to the substrate site. A PRPP-binding motif is present at residues valine 98–threonine 110.

This sequence belongs to the purine/pyrimidine phosphoribosyltransferase family. PyrR subfamily. As to quaternary structure, homodimer and homohexamer; in equilibrium.

The enzyme catalyses UMP + diphosphate = 5-phospho-alpha-D-ribose 1-diphosphate + uracil. Functionally, regulates transcriptional attenuation of the pyrimidine nucleotide (pyr) operon by binding in a uridine-dependent manner to specific sites on pyr mRNA. This disrupts an antiterminator hairpin in the RNA and favors formation of a downstream transcription terminator, leading to a reduced expression of downstream genes. Also displays a weak uracil phosphoribosyltransferase activity which is not physiologically significant. The polypeptide is Bifunctional protein PyrR (Staphylococcus haemolyticus (strain JCSC1435)).